Here is a 199-residue protein sequence, read N- to C-terminus: Small ribosomal subunit protein uS2 (199 aa).

The protein belongs to the universal ribosomal protein uS2 family.

In Thermoplasma volcanium (strain ATCC 51530 / DSM 4299 / JCM 9571 / NBRC 15438 / GSS1), this protein is Small ribosomal subunit protein uS2 (rps2).